Consider the following 2442-residue polypeptide: Piezo-type mechanosensitive ion channel component 1 (2442 aa).

Residues 1 to 5 (MTVPP) are Extracellular-facing. Residues 6–26 (LLKSCVVKLLLPAALLAAAII) traverse the membrane as a helical segment. R27 is a topological domain (cytoplasmic). Residues 28-48 (PSFLSIGYVLLALVSAVLPPI) form a helical membrane-spanning segment. Topologically, residues 49–56 (RKSLALPK) are extracellular. Residues 57 to 77 (LVGTFVIITFLFCLAVALGVG) traverse the membrane as a helical segment. Residues 78-122 (SYQISEQVVHKNDRTYICNRSDTTLFRSIGLVRFHPTGTFESTRA) lie on the Cytoplasmic side of the membrane. Residues 123–143 (FLPEIIATSAALLTIIIVMFL) form a helical membrane-spanning segment. Residues 144-173 (SHRDEQLDVVGDVVTVRSESGREQRRQRKL) lie on the Extracellular side of the membrane. The chain crosses the membrane as a helical span at residues 174-196 (AAIMWSAIGNSLRRLTNFVLFLF). Residues 197–198 (TA) lie on the Cytoplasmic side of the membrane. A helical transmembrane segment spans residues 199 to 219 (YVGIVKPSLSNSIYFLAFLFI). The Extracellular portion of the chain corresponds to 220–239 (STWWSTYTPLRHGVYNQIKK). A helical membrane pass occupies residues 240-260 (FLIFYSALHFLVLYTYQIPIV). At 261-303 (HHSWLPTGSFLPRLFGLTVLMDSSCPEWWKFPFVAPDFNDDDL) the chain is on the cytoplasmic side. The chain crosses the membrane as a helical span at residues 304–324 (IMKWPLYANPIVVLVFFYLTV). Over 325 to 454 (AQYKFTRNGS…GDKESAASKG (130 aa)) the chain is Extracellular. Residues N332, N392, and N440 are each glycosylated (N-linked (GlcNAc...) asparagine). Positions 389 to 417 (LLSNASSSANDDEQGRARSRSPLRNGEEQ) are disordered. The chain crosses the membrane as a helical span at residues 455–475 (MIAVMTFVIFHSYSIALTAMM). The Cytoplasmic portion of the chain corresponds to 476–478 (TWA). A helical transmembrane segment spans residues 479–499 (LLYHSIFGLILLILTCILWIF). The Extracellular segment spans residues 500–506 (RDTRKSS). A helical membrane pass occupies residues 507 to 527 (FAMAPIILMYIEFLLILQYFL). Topologically, residues 528 to 552 (SMDIHAEIGDPAWMNFVGIEWTTLP) are cytoplasmic. The helical transmembrane segment at 553-573 (VHAVIILCVQTLLTLPVFLLL) threads the bilayer. The Extracellular segment spans residues 574–633 (RLARREKFYESLSDYERQRRINSYGTFGASKTGAGGVAVAKFQDPKSRKFAAFVEYLSNK). Residues 634-654 (VSVYFIFVVSVVLLVVSTCFA) traverse the membrane as a helical segment. Residues 655–656 (PN) lie on the Cytoplasmic side of the membrane. A helical transmembrane segment spans residues 657–677 (FYNILFFALWALNLIYLKFSF). At 678-683 (RLYRGL) the chain is on the extracellular side. Residues 684 to 704 (AYAFWLTLTFYTSIVIIALYI) form a helical membrane-spanning segment. The Cytoplasmic segment spans residues 705–739 (YQFPGVSQWIIRNTSLSQEWLNAIGLVDFRAIGES). A helical membrane pass occupies residues 740–760 (GALFLQLLAPIALFVVTMLQL). Topologically, residues 761-832 (KFFHGPWSRA…WRFFEVHISK (72 aa)) are extracellular. The segment at 768-798 (SRATSPRRAENDPPTSTTEAAAVASTSGTQG) is disordered. Residues 782-794 (TSTTEAAAVASTS) show a composition bias toward low complexity. N816 carries N-linked (GlcNAc...) asparagine glycosylation. A helical membrane pass occupies residues 833–853 (IVFVIIAIFIANNINALYIPL). Residues 854–874 (VILLSLAICLPSAADGIFSLF) lie on the Cytoplasmic side of the membrane. A helical transmembrane segment spans residues 875–895 (MCAYLFLVALSKMIYQLDIVP). Over 896–931 (ELSQIDRGVGADNCSHGNISMPEWFGLKKEVEGTEP) the chain is Extracellular. Residues N908 and N913 are each glycosylated (N-linked (GlcNAc...) asparagine). The chain crosses the membrane as a helical span at residues 932–952 (IYMLFGVIVSIIALAFQSIVI). Topologically, residues 953–990 (YRQRHYRASLGLPESMRAKVFPDFHHSHFDRSLKNAIQ) are cytoplasmic. A helical membrane pass occupies residues 991 to 1011 (FLIDYGFYKFGLEITMIAIGI). A topological domain (extracellular) is located at residue D1012. Residues 1013 to 1033 (IFNRMDALAAIQCFWLVLFAL) traverse the membrane as a helical segment. The Cytoplasmic segment spans residues 1034–1041 (NKRVFVRR). Residues 1042-1062 (IWVFYVIYMAILYPLQFFSYV) form a helical membrane-spanning segment. Residues 1063–1096 (GLPPDSCIEYPWSYWIPSYSDDARFNLSYLLNLS) are Extracellular-facing. N-linked (GlcNAc...) asparagine glycosylation is found at N1088 and N1094. The chain crosses the membrane as a helical span at residues 1097–1117 (IYGVNWPSAYLIGDFFVLLLA). Topologically, residues 1118 to 1160 (SCQLAVFRREGEDNDSIYNDGNFVIKPENPQYDFIDTKKSYVD) are cytoplasmic. The helical transmembrane segment at 1161-1181 (YFKSFVFHYGHWITLMSTLAA) threads the bilayer. Over 1182–1187 (GIAGTS) the chain is Extracellular. Residues 1188–1210 (LFALGYIIFTLTMLWSGNNLYVM) form a helical membrane-spanning segment. Over 1211 to 1231 (NSTLRSFEHTLKRWNALLGYT) the chain is Cytoplasmic. The chain crosses the membrane as a helical span at residues 1232-1252 (LFTITMKVCLQIFGCVFLSWF). Residues 1253–1299 (DQSGGWGKTLCIVRQLFSITCVNNECHVLKELEDFSKACAVETKEGN) lie on the Extracellular side of the membrane. A helical transmembrane segment spans residues 1300-1320 (IGFDVIALSFLVFQIRIFHSW). Over 1321–1615 (YFQHCMVEYR…VVNCIGAHTD (295 aa)) the chain is Cytoplasmic. A disordered region spans residues 1463–1502 (DTIKDPDSRALIAVSEPEARKPGGTEETDGDEDEDNKDSK). Residues 1488–1498 (EETDGDEDEDN) show a composition bias toward acidic residues. The chain crosses the membrane as a helical span at residues 1616–1636 (ILCYFFAIMTQVMTGGLITLP). The Extracellular segment spans residues 1637 to 1654 (LPLMSLFWGNLSNPRPSK). Residue N1646 is glycosylated (N-linked (GlcNAc...) asparagine). Residues 1655–1675 (FFWVTMITYTECVIVIKFVCQ) traverse the membrane as a helical segment. Residues 1676 to 1706 (FAFMPYNSITWRTEHQMDPMSLDKLFGVSQR) are Cytoplasmic-facing. Residues 1707–1727 (DSFALWDIVLLFSLFFHRYML) traverse the membrane as a helical segment. Topologically, residues 1728-1833 (RKLGLWKDAN…KFRYIRDLYP (106 aa)) are extracellular. N-linked (GlcNAc...) asparagine glycosylation is present at N1737. The chain crosses the membrane as a helical span at residues 1834–1854 (IMFGIDVICFLIMTFGYSAFG). Over 1855–1866 (EGGSGNVLDDVK) the chain is Cytoplasmic. Residues 1867–1887 (ASRIPVTLVVMLVGMTLAIII) traverse the membrane as a helical segment. The Extracellular segment spans residues 1888-1900 (DRALYLRKSVVGK). The chain crosses the membrane as a helical span at residues 1901-1921 (LIYQVLMIAFLHIWVFLVLPN). Residues 1922–1930 (MTRRSAISN) lie on the Cytoplasmic side of the membrane. Residues 1931–1951 (HVAQALYVIKSCYFLVSAWQI) traverse the membrane as a helical segment. The Extracellular portion of the chain corresponds to 1952-2046 (RNGYPELCIG…KGKLVKYMMG (95 aa)). A helical transmembrane segment spans residues 2047–2067 (FPIIIGVVIFIFSPLLLWSLL). At 2068–2346 (NQIGTISMPE…VGFIDRAFPS (279 aa)) the chain is on the cytoplasmic side. The chain crosses the membrane as a helical span at residues 2347–2367 (FLAKVFKGGVIAVYLSVILVV). The Extracellular segment spans residues 2368–2442 (GRGLVRGIFT…WTRMSKKKQE (75 aa)).

This sequence belongs to the PIEZO (TC 1.A.75) family. As to expression, expressed in the pharyngeal-intestinal and spermathecal-uterine valves and in multiple reproductive tissues including the germline, somatic oviduct, and spermatheca. During reproduction, it is expressed in sheath cells, sperm, both spermathecal valves and the spermathecal bag cells.

Its subcellular location is the cell membrane. In terms of biological role, pore-forming subunit of a mechanosensitive non-specific cation channel. Generates currents characterized by a linear current-voltage relationship. Plays a role in reproduction by positively regulating inter-tissue signaling to promote oocyte maturation, ovulation and fertilization, and sperm navigation from and to the spermatheca. May play a role in regulating cytosolic and endoplasmic reticulum calcium ion release. The protein is Piezo-type mechanosensitive ion channel component 1 of Caenorhabditis elegans.